Reading from the N-terminus, the 204-residue chain is ATP-dependent Clp protease proteolytic subunit 1 (204 aa).

Serine 97 acts as the Nucleophile in catalysis. The active site involves histidine 122.

The protein belongs to the peptidase S14 family. As to quaternary structure, fourteen ClpP subunits assemble into 2 heptameric rings which stack back to back to give a disk-like structure with a central cavity, resembling the structure of eukaryotic proteasomes.

The protein localises to the cytoplasm. It carries out the reaction Hydrolysis of proteins to small peptides in the presence of ATP and magnesium. alpha-casein is the usual test substrate. In the absence of ATP, only oligopeptides shorter than five residues are hydrolyzed (such as succinyl-Leu-Tyr-|-NHMec, and Leu-Tyr-Leu-|-Tyr-Trp, in which cleavage of the -Tyr-|-Leu- and -Tyr-|-Trp bonds also occurs).. Its function is as follows. Cleaves peptides in various proteins in a process that requires ATP hydrolysis. Has a chymotrypsin-like activity. Plays a major role in the degradation of misfolded proteins. The chain is ATP-dependent Clp protease proteolytic subunit 1 from Nostoc sp. (strain PCC 7120 / SAG 25.82 / UTEX 2576).